Here is a 333-residue protein sequence, read N- to C-terminus: Probable G-protein coupled receptor 33 (333 aa).

The Extracellular portion of the chain corresponds to 1 to 30 (MDLINSTDYLINASTLVRNSTQFLAPASKM). N-linked (GlcNAc...) asparagine glycans are attached at residues asparagine 5, asparagine 12, and asparagine 19. A helical membrane pass occupies residues 31–53 (IIALSLYISSIIGTITNGLYLWV). At 54–64 (LRFKMKQTVNT) the chain is on the cytoplasmic side. The chain crosses the membrane as a helical span at residues 65–86 (LLFFHLILSYFISTMILPFMAT). The Extracellular segment spans residues 87–103 (SQLQDNHWNFGTALCKV). Cysteine 101 and cysteine 179 are joined by a disulfide. A helical transmembrane segment spans residues 104 to 124 (FNGTLSLGMFTSVFFLSAIGL). The Cytoplasmic segment spans residues 125 to 143 (DRYLLTLHPVWSQQHRTPR). Residues 144–165 (WASSIVLGVWISAAALSIPYLI) form a helical membrane-spanning segment. Residues 166–209 (FRQTHHDRKGKVTCQNNYAVSTNWESKEMQALRQWIHVACFISR) lie on the Extracellular side of the membrane. A helical transmembrane segment spans residues 210 to 230 (FLLGFLLPFFIIIFCYERVAS). Residues 231–246 (KVKERSLFKSSKPFKV) lie on the Cytoplasmic side of the membrane. A helical membrane pass occupies residues 247–268 (MMTAIISFFVCWMPYHIHQGLL). Over 269–283 (LTTNQSLLLELTLIL) the chain is Extracellular. Asparagine 272 is a glycosylation site (N-linked (GlcNAc...) asparagine). A helical membrane pass occupies residues 284–303 (TVLTTSFNTIFSPTLYLFVG). The Cytoplasmic portion of the chain corresponds to 304-333 (ENFKKVFKKSILALFESTFSEDSSVERTQT).

Belongs to the G-protein coupled receptor 1 family.

It is found in the cell membrane. Orphan receptor; could be a chemoattractant receptor. This Pan troglodytes (Chimpanzee) protein is Probable G-protein coupled receptor 33 (GPR33).